Consider the following 284-residue polypeptide: Putative cysteine-rich repeat secretory protein 7 (284 aa).

An N-terminal signal peptide occupies residues 1 to 24 (MARIILTAPLFYFFFSLLSHQTMS). Gnk2-homologous domains lie at 26 to 128 (PQHM…NVSF) and 134 to 244 (SKPV…TFVL). Positions 247–284 (PAPSPSSLPPISPTSSPPLSLPPQLPPPLSQPPPPLST) are disordered.

It belongs to the cysteine-rich repeat secretory protein family.

The protein localises to the secreted. The polypeptide is Putative cysteine-rich repeat secretory protein 7 (CRRSP7) (Arabidopsis thaliana (Mouse-ear cress)).